A 160-amino-acid chain; its full sequence is Small ribosomal subunit protein bS6 (160 aa).

A disordered region spans residues 100-160; that stretch reads PSSVLARKSD…DDARETAGAE (61 aa). Basic and acidic residues-rich tracts occupy residues 106–116 and 136–160; these read RKSDDRGDRGN and RSSE…AGAE.

This sequence belongs to the bacterial ribosomal protein bS6 family.

Functionally, binds together with bS18 to 16S ribosomal RNA. This Gluconobacter oxydans (strain 621H) (Gluconobacter suboxydans) protein is Small ribosomal subunit protein bS6.